The primary structure comprises 262 residues: tRNA (guanine-N(7)-)-methyltransferase (262 aa).

A disordered region spans residues methionine 1–glutamine 58. Over residues proline 40 to glycine 51 the composition is skewed to basic residues. S-adenosyl-L-methionine-binding residues include glutamate 92, glutamate 117, aspartate 144, and aspartate 167. Aspartate 167 is a catalytic residue. Lysine 171 is a substrate binding site. An interaction with RNA region spans residues arginine 173 to arginine 178. Residues aspartate 203 and threonine 241–glutamate 244 each bind substrate.

Belongs to the class I-like SAM-binding methyltransferase superfamily. TrmB family.

The enzyme catalyses guanosine(46) in tRNA + S-adenosyl-L-methionine = N(7)-methylguanosine(46) in tRNA + S-adenosyl-L-homocysteine. The protein operates within tRNA modification; N(7)-methylguanine-tRNA biosynthesis. Functionally, catalyzes the formation of N(7)-methylguanine at position 46 (m7G46) in tRNA. This chain is tRNA (guanine-N(7)-)-methyltransferase, found in Cupriavidus metallidurans (strain ATCC 43123 / DSM 2839 / NBRC 102507 / CH34) (Ralstonia metallidurans).